A 253-amino-acid chain; its full sequence is 5'-nucleotidase SurE (253 aa).

A divalent metal cation-binding residues include D8, D9, S40, and N93.

Belongs to the SurE nucleotidase family. It depends on a divalent metal cation as a cofactor.

The protein localises to the cytoplasm. It catalyses the reaction a ribonucleoside 5'-phosphate + H2O = a ribonucleoside + phosphate. Its function is as follows. Nucleotidase that shows phosphatase activity on nucleoside 5'-monophosphates. This is 5'-nucleotidase SurE from Haemophilus ducreyi (strain 35000HP / ATCC 700724).